Reading from the N-terminus, the 303-residue chain is Lipoyl synthase (303 aa).

The [4Fe-4S] cluster site is built by Cys-40, Cys-45, Cys-51, Cys-67, Cys-71, Cys-74, and Ser-280. Residues 53–269 form the Radical SAM core domain; it reads AVRKTATFMI…KEIALSKGFS (217 aa).

Belongs to the radical SAM superfamily. Lipoyl synthase family. The cofactor is [4Fe-4S] cluster.

It is found in the cytoplasm. The enzyme catalyses [[Fe-S] cluster scaffold protein carrying a second [4Fe-4S](2+) cluster] + N(6)-octanoyl-L-lysyl-[protein] + 2 oxidized [2Fe-2S]-[ferredoxin] + 2 S-adenosyl-L-methionine + 4 H(+) = [[Fe-S] cluster scaffold protein] + N(6)-[(R)-dihydrolipoyl]-L-lysyl-[protein] + 4 Fe(3+) + 2 hydrogen sulfide + 2 5'-deoxyadenosine + 2 L-methionine + 2 reduced [2Fe-2S]-[ferredoxin]. Its pathway is protein modification; protein lipoylation via endogenous pathway; protein N(6)-(lipoyl)lysine from octanoyl-[acyl-carrier-protein]. Its function is as follows. Catalyzes the radical-mediated insertion of two sulfur atoms into the C-6 and C-8 positions of the octanoyl moiety bound to the lipoyl domains of lipoate-dependent enzymes, thereby converting the octanoylated domains into lipoylated derivatives. The protein is Lipoyl synthase of Halalkalibacterium halodurans (strain ATCC BAA-125 / DSM 18197 / FERM 7344 / JCM 9153 / C-125) (Bacillus halodurans).